The following is a 146-amino-acid chain: D-aminoacyl-tRNA deacylase (146 aa).

The Gly-cisPro motif, important for rejection of L-amino acids motif lies at 137–138 (GP).

It belongs to the DTD family. In terms of assembly, homodimer.

Its subcellular location is the cytoplasm. It carries out the reaction glycyl-tRNA(Ala) + H2O = tRNA(Ala) + glycine + H(+). It catalyses the reaction a D-aminoacyl-tRNA + H2O = a tRNA + a D-alpha-amino acid + H(+). Functionally, an aminoacyl-tRNA editing enzyme that deacylates mischarged D-aminoacyl-tRNAs. Also deacylates mischarged glycyl-tRNA(Ala), protecting cells against glycine mischarging by AlaRS. Acts via tRNA-based rather than protein-based catalysis; rejects L-amino acids rather than detecting D-amino acids in the active site. By recycling D-aminoacyl-tRNA to D-amino acids and free tRNA molecules, this enzyme counteracts the toxicity associated with the formation of D-aminoacyl-tRNA entities in vivo and helps enforce protein L-homochirality. The sequence is that of D-aminoacyl-tRNA deacylase from Cellvibrio japonicus (strain Ueda107) (Pseudomonas fluorescens subsp. cellulosa).